A 510-amino-acid polypeptide reads, in one-letter code: Bifunctional purine biosynthesis protein PurH (510 aa).

Residues Met-1–Cys-142 form the MGS-like domain.

Belongs to the PurH family.

It carries out the reaction (6R)-10-formyltetrahydrofolate + 5-amino-1-(5-phospho-beta-D-ribosyl)imidazole-4-carboxamide = 5-formamido-1-(5-phospho-D-ribosyl)imidazole-4-carboxamide + (6S)-5,6,7,8-tetrahydrofolate. The enzyme catalyses IMP + H2O = 5-formamido-1-(5-phospho-D-ribosyl)imidazole-4-carboxamide. It functions in the pathway purine metabolism; IMP biosynthesis via de novo pathway; 5-formamido-1-(5-phospho-D-ribosyl)imidazole-4-carboxamide from 5-amino-1-(5-phospho-D-ribosyl)imidazole-4-carboxamide (10-formyl THF route): step 1/1. The protein operates within purine metabolism; IMP biosynthesis via de novo pathway; IMP from 5-formamido-1-(5-phospho-D-ribosyl)imidazole-4-carboxamide: step 1/1. In Campylobacter jejuni subsp. doylei (strain ATCC BAA-1458 / RM4099 / 269.97), this protein is Bifunctional purine biosynthesis protein PurH.